The primary structure comprises 160 residues: Lipoprotein signal peptidase (160 aa).

A run of 2 helical transmembrane segments spans residues 63 to 83 (YRLP…AVTF) and 89 to 109 (DQHL…GNLI). Catalysis depends on residues Asp-119 and Asp-137. A helical membrane pass occupies residues 132-152 (AFNVADSAICVGVALLAVDMI).

It belongs to the peptidase A8 family.

It is found in the cell inner membrane. It carries out the reaction Release of signal peptides from bacterial membrane prolipoproteins. Hydrolyzes -Xaa-Yaa-Zaa-|-(S,diacylglyceryl)Cys-, in which Xaa is hydrophobic (preferably Leu), and Yaa (Ala or Ser) and Zaa (Gly or Ala) have small, neutral side chains.. Its pathway is protein modification; lipoprotein biosynthesis (signal peptide cleavage). Functionally, this protein specifically catalyzes the removal of signal peptides from prolipoproteins. The protein is Lipoprotein signal peptidase of Geobacter sulfurreducens (strain ATCC 51573 / DSM 12127 / PCA).